A 119-amino-acid polypeptide reads, in one-letter code: Hemerythrin-like protein (119 aa).

His26, His56, Glu60, His75, His79, His107, and Asp112 together coordinate Fe cation.

The protein belongs to the hemerythrin family.

Its function is as follows. Oxygen-binding protein. The oxygen-binding site contains two iron atoms. This chain is Hemerythrin-like protein (nfa1), found in Naegleria fowleri (Brain eating amoeba).